Reading from the N-terminus, the 406-residue chain is MAFLTAVLYLGFACISQGLPTWPDRVESRNPLFGSRVALNLPSLLDGNRHHRDMRYPLYMMQLYQNLVTGNDTGLANRPNTATKEYDTVLSLFAKKCTESENRWTLSFDMSAVSRSNELKLAELRILLPHTEPSHNITMDMYHSRDGEDNLYLGSFNANPPSTKGSPWKVFNVTKILQPYFKERRDIDSEHLKAKERAERGSGMSNAEFIDAPGPSQQYNPHQTSVPTYLNTKGVMLVLFTKVKSSANHIGFPSLIKTAESSKYVDIEKASRVPGIRRHRRNRNENHHLSIGSIPSRHVENGKPLCRRVDMIVDFEDIGWSSWIVYPKKYNAYRCEGACPIPLNETFKPTNHAYMKSVVKLYQPERVECPLCVPVKMSPLSMLYYEGDEVVLRHHQEMIVEECGCS.

A signal peptide spans 1 to 18 (MAFLTAVLYLGFACISQG). A propeptide spanning residues 19-281 (LPTWPDRVES…RVPGIRRHRR (263 aa)) is cleaved from the precursor. 3 N-linked (GlcNAc...) asparagine glycosylation sites follow: N71, N136, and N172. The interval 195-222 (KERAERGSGMSNAEFIDAPGPSQQYNPH) is disordered. 3 disulfides stabilise this stretch: C306/C372, C335/C403, and C339/C405. Residue N344 is glycosylated (N-linked (GlcNAc...) asparagine).

Belongs to the TGF-beta family. In terms of assembly, homodimer; disulfide-linked. Interacts with, and is inhibited by cer1 and gdf10/bmp3b. In the first phase of expression, localized to the vegetal region of the blastula. During gastrulation (stage 10.5), this expression disappears and instead becomes localized to the dorsal marginal zone, with enrichment in the organizer. During the second phase of expression in neurulae and tailbud embryos, expression restarts firstly in two symmetric patches near the posterior end of the notochord, and then in a large asymmetrical domain in the left lateral plate mesoderm.

The protein resides in the secreted. Cooperation and regulatory loops of multiple nodals are essential for mesendoderm patterning in early embryos. Essential for mesoderm formation and axial patterning during embryonic development. Activates the activin-like signaling pathway to induce dorsal and ventral mesoderm in animal cap ectoderm. In addition, also dorsalizes ventral marginal zone (VMZ) tissues during gastrulation. Acts in a downstream signaling cascade via cripto and cer1 to mediate cardiogenesis in embryonic mesoderm. Directs the orientation of the left-right axis by driving the left-specific gene cascade in the left lateral plate mesoderm. The protein is Nodal homolog of Xenopus laevis (African clawed frog).